Consider the following 243-residue polypeptide: Peptidyl-tRNA hydrolase (243 aa).

TRNA is bound at residue Tyr14. Catalysis depends on His19, which acts as the Proton acceptor. TRNA is bound by residues Tyr64, Asn66, and Asn112. The span at 190–207 (KAEEEKPRKEGKDGEKKP) shows a compositional bias: basic and acidic residues. The tract at residues 190-243 (KAEEEKPRKEGKDGEKKPAGQSHIRQARSSNQPKLPATGPMAEMLKKMFGNKGE) is disordered. Over residues 212–222 (HIRQARSSNQP) the composition is skewed to polar residues.

It belongs to the PTH family. As to quaternary structure, monomer.

It localises to the cytoplasm. It carries out the reaction an N-acyl-L-alpha-aminoacyl-tRNA + H2O = an N-acyl-L-amino acid + a tRNA + H(+). Functionally, hydrolyzes ribosome-free peptidyl-tRNAs (with 1 or more amino acids incorporated), which drop off the ribosome during protein synthesis, or as a result of ribosome stalling. In terms of biological role, catalyzes the release of premature peptidyl moieties from peptidyl-tRNA molecules trapped in stalled 50S ribosomal subunits, and thus maintains levels of free tRNAs and 50S ribosomes. The polypeptide is Peptidyl-tRNA hydrolase (Rhizobium etli (strain CIAT 652)).